Consider the following 258-residue polypeptide: Tetraspanin-18B (258 aa).

At 1–25 (MGLGEASARGTSMEGDCLSCIKYLM) the chain is on the cytoplasmic side. A helical membrane pass occupies residues 26–46 (FVFNFLIFLGGSFLLGVGVWV). Over 47–61 (VVDPTGFREIVAANP) the chain is Extracellular. The helical transmembrane segment at 62–82 (LLFTGVYIILAMGGMLFLLGF) threads the bilayer. Residues 83–94 (LGCCGAIRENKC) are Cytoplasmic-facing. Residues 95 to 115 (LLLFFFMLILIIFLAELAAAI) traverse the membrane as a helical segment. Topologically, residues 116–228 (LAFIFREHLT…SAVVDYFEMY (113 aa)) are extracellular. Asparagine 141 carries N-linked (GlcNAc...) asparagine glycosylation. A helical transmembrane segment spans residues 229–249 (IYVAGALAIVVLTIELFAMVF). Over 250–258 (AMCLFRGIQ) the chain is Cytoplasmic.

This sequence belongs to the tetraspanin (TM4SF) family.

The protein resides in the membrane. Its function is as follows. May regulate angiogenesis through KDR/VEGFR2 and NOTCH1 pathways. The protein is Tetraspanin-18B (tspan18b) of Danio rerio (Zebrafish).